Here is a 206-residue protein sequence, read N- to C-terminus: Guanylate kinase (206 aa).

Residues 6–184 (GILFILSGPS…AVDKVKTIIK (179 aa)) enclose the Guanylate kinase-like domain. Residue 13-20 (GPSGVGKG) coordinates ATP.

Belongs to the guanylate kinase family.

It localises to the cytoplasm. The enzyme catalyses GMP + ATP = GDP + ADP. Its function is as follows. Essential for recycling GMP and indirectly, cGMP. The chain is Guanylate kinase from Oceanobacillus iheyensis (strain DSM 14371 / CIP 107618 / JCM 11309 / KCTC 3954 / HTE831).